The following is a 910-amino-acid chain: MGTGTLSSLLLLLLLVTIGDADMKGHFDPAKCRYALGMQDRTIPDSDISVSSSWSDSTAARHSRLESSDGDGAWCPAGPVFPKEEEYLQVDLRRLHLVALVGTQGRHAGGLGKEFSRSYRLRYSRDGRRWMDWKDRWGQEVISGNEDPGGVVLKDLGPPMVARLVRFYPRADRVMSVCLRVELYGCLWRDGLLSYTAPVGQTMQLSEMVYLNDSTYDGYTAGGLQYGGLGQLADGVVGLDDFRQSQELRVWPGYDYVGWSNHSFPSGYVEMEFEFDRLRSFQTMQVHCNNMHTLGARLPGGVECRFKRGPAMAWEGEPVHHALGGSLGDPRARAISVPLGGHVGRFLQCRFLFAGPWLLFSEISFISDVVNDSSDTFPPAPWWPPGPPPTNFSSLELEPRGQQPVAKAEGSPTAILIGCLVAIILLLLLIIALMLWRLHWRRLLSKAERRVLEEELTVHLSVPGDTILINNRPGPREPPPYQEPRPRGTPTHSAPCVPNGSALLLSNPAYRLLLATYARPPRGPGPPTPAWAKPTNTQACSGDYMEPEKPGAPLLPPPPQNSVPHYAEADIVTLQGVTGGNTYAVPALPPGAVGDGPPRVDFPRSRLRFKEKLGEGQFGEVHLCEVEDPQDLVTSDFPISVQKGHPLLVAVKILRPDATKNARNDFLKEVKIMSRLKDLNIIRLLGVCVQDDPLCMITDYMENGDLNQFLSAHQLENKVTQGLPGDRESDQGPTISYPMLLHVGAQIASGMRYLATLNFVHRDLATRNCLVGENFTIKIADFGMSRNLYAGDYYRVQGRAVLPIRWMAWECILMGKFTTASDVWAFGVTLWEVLMLCRSQPFGQLTDEQVIENAGEFFRDQGRQVYLSRPPACPQTLYELMLRCWSREPEQRPPFSQLHRFLADDALNTV.

The first 19 residues, 1-19 (MGTGTLSSLLLLLLLVTIG), serve as a signal peptide directing secretion. At 22–414 (DMKGHFDPAK…VAKAEGSPTA (393 aa)) the chain is on the extracellular side. Residues 32 to 186 (CRYALGMQDR…VCLRVELYGC (155 aa)) enclose the F5/8 type C domain. Disulfide bonds link Cys32–Cys186 and Cys75–Cys178. Residues 193–368 (LSYTAPVGQT…LFSEISFISD (176 aa)) are DS-like domain. Residues Asn212, Gln231, Asp234, Val236, Tyr254, and Tyr256 each contribute to the Ca(2+) site. N-linked (GlcNAc...) asparagine glycosylation occurs at Asn212. Asn261 is a glycosylation site (N-linked (GlcNAc...) asparagine). Residues Cys304 and Cys349 are joined by a disulfide bond. Ca(2+) is bound by residues Ser361 and Glu362. N-linked (GlcNAc...) asparagine glycans are attached at residues Asn371 and Asn391. Residues 415-435 (ILIGCLVAIILLLLLIIALML) form a helical membrane-spanning segment. The Cytoplasmic segment spans residues 436–910 (WRLHWRRLLS…FLADDALNTV (475 aa)). The segment at 467-494 (ILINNRPGPREPPPYQEPRPRGTPTHSA) is disordered. The PPxY motif signature appears at 478–481 (PPPY). A phosphotyrosine; by autocatalysis mark is found at Tyr481, Tyr510, and Tyr517. Residues 607–902 (LRFKEKLGEG…PPFSQLHRFL (296 aa)) enclose the Protein kinase domain. ATP is bound by residues 613 to 621 (LGEGQFGEV) and Lys652. Tyr737 is modified (phosphotyrosine; by autocatalysis). Asp763 serves as the catalytic Proton acceptor. Tyr789, Tyr793, and Tyr794 each carry phosphotyrosine; by autocatalysis.

This sequence belongs to the protein kinase superfamily. Tyr protein kinase family. Insulin receptor subfamily. Homodimer. Interacts (via PPxY motif) with WWC1 (via WW domains) in a collagen-regulated manner. Forms a tripartite complex with WWC1 and PRKCZ, but predominantly in the absence of collagen. Interacts (tyrosine phosphorylated) with SHC1. Interacts with SRC. Interacts with MYH9. Interacts with CDH1. Interacts with PTPN11. Interacts with NCK2. Autophosphorylated in response to fibrillar collagen binding. In terms of tissue distribution, various embryonic and adult tissues; also proliferative zones of the developing brain; hippocampal neurons.

It is found in the cell membrane. The catalysed reaction is L-tyrosyl-[protein] + ATP = O-phospho-L-tyrosyl-[protein] + ADP + H(+). In terms of biological role, tyrosine kinase that functions as a cell surface receptor for fibrillar collagen and regulates cell attachment to the extracellular matrix, remodeling of the extracellular matrix, cell migration, differentiation, survival and cell proliferation. Collagen binding triggers a signaling pathway that involves SRC and leads to the activation of MAP kinases. Regulates remodeling of the extracellular matrix by up-regulation of the matrix metalloproteinases MMP2, MMP7 and MMP9, and thereby facilitates cell migration and wound healing. Promotes smooth muscle cell migration, and thereby contributes to arterial wound healing. Also plays a role in tumor cell invasion. Phosphorylates PTPN11. Required for normal blastocyst implantation during pregnancy, for normal mammary gland differentiation and normal lactation. Required for normal ear morphology and normal hearing. The polypeptide is Epithelial discoidin domain-containing receptor 1 (Ddr1) (Rattus norvegicus (Rat)).